The primary structure comprises 349 residues: MSASKMAMSNLEKILELVPLSPTSFVTKYLPAAPVGSKGTFGGTLVSQSLLASLHTVPLNFFPTSLHSYFIKGGDPRTKITYHVQNLRNGRNFIHKQVSAYQHDKLIFTSMILFAVQRSKEHDSLQHWETIPGLQGKQPDPHRYEEATSLFQKEVLDPQKLSRYASLSDRFQDATSMSKYVDAFQYGVMEYQFPKDMFYSARHTDELDYFVKVRPPITTVEHAGDESSLHKHHPYRIPKSITPENDARYNYVAFAYLSDSYLLLTIPYFHNLPLYCHSFSVSLDHTIYFHQLPHVNNWIYLKISNPRSHWDKHLVQGKYFDTQSGRIMASVSQEGYVVYGSERDIRAKF.

Active-site charge relay system residues include D259, S282, and Q333. A Microbody targeting signal motif is present at residues 347–349; sequence AKF.

It belongs to the C/M/P thioester hydrolase family.

The protein resides in the peroxisome. It carries out the reaction hexadecanoyl-CoA + H2O = hexadecanoate + CoA + H(+). Its function is as follows. Acyl-coenzyme A (acyl-CoA) thioesterases are a group of enzymes that catalyze the hydrolysis of acyl-CoAs to the free fatty acid and coenzyme A (CoASH), providing the potential to regulate intracellular levels of acyl-CoAs, free fatty acids and CoASH. Contributes to growth on fatty acids. In Saccharomyces cerevisiae (strain ATCC 204508 / S288c) (Baker's yeast), this protein is Peroxisomal acyl-coenzyme A thioester hydrolase 1 (TES1).